The primary structure comprises 178 residues: ATP synthase subunit delta (178 aa).

It belongs to the ATPase delta chain family. In terms of assembly, F-type ATPases have 2 components, F(1) - the catalytic core - and F(0) - the membrane proton channel. F(1) has five subunits: alpha(3), beta(3), gamma(1), delta(1), epsilon(1). F(0) has three main subunits: a(1), b(2) and c(10-14). The alpha and beta chains form an alternating ring which encloses part of the gamma chain. F(1) is attached to F(0) by a central stalk formed by the gamma and epsilon chains, while a peripheral stalk is formed by the delta and b chains.

It is found in the cell membrane. Functionally, f(1)F(0) ATP synthase produces ATP from ADP in the presence of a proton or sodium gradient. F-type ATPases consist of two structural domains, F(1) containing the extramembraneous catalytic core and F(0) containing the membrane proton channel, linked together by a central stalk and a peripheral stalk. During catalysis, ATP synthesis in the catalytic domain of F(1) is coupled via a rotary mechanism of the central stalk subunits to proton translocation. This protein is part of the stalk that links CF(0) to CF(1). It either transmits conformational changes from CF(0) to CF(1) or is implicated in proton conduction. The sequence is that of ATP synthase subunit delta from Polynucleobacter asymbioticus (strain DSM 18221 / CIP 109841 / QLW-P1DMWA-1) (Polynucleobacter necessarius subsp. asymbioticus).